The primary structure comprises 437 residues: Vasoactive intestinal polypeptide receptor 2 (437 aa).

A signal peptide spans 1–22 (MRASVVLTCYCWLLVRVSSIHP). At 23–123 (ECRFHLEIQE…EDESKITFYI (101 aa)) the chain is on the extracellular side. 3 cysteine pairs are disulfide-bonded: Cys37–Cys60, Cys51–Cys92, and Cys74–Cys108. N-linked (GlcNAc...) asparagine glycans are attached at residues Asn57, Asn87, and Asn91. A helical transmembrane segment spans residues 124–149 (LVKAIYTLGYSVSLMSLTTGSIIICL). The Cytoplasmic portion of the chain corresponds to 150–157 (FRKLHCTR). The chain crosses the membrane as a helical span at residues 158–179 (NYIHLNLFLSFMLRAISVLVKD). Over 180–202 (SVLYSSSGTLRCHDQPGSWVGCK) the chain is Extracellular. An intrachain disulfide couples Cys201 to Cys270. Residues 203–227 (LSLVFFQYCIMANFYWLLVEGLYLH) traverse the membrane as a helical segment. Residues 228–238 (TLLVAILPPSR) lie on the Cytoplasmic side of the membrane. A helical transmembrane segment spans residues 239 to 260 (CFLAYLLIGWGIPSVCIGAWIA). Residues 261–279 (TRLSLEDTGCWDTNDHSIP) lie on the Extracellular side of the membrane. Residues 280–303 (WWVIRMPILISIVVNFALFISIVR) form a helical membrane-spanning segment. At 304–324 (ILLQKLTSPDVGGNDQSQYKR) the chain is on the cytoplasmic side. Residues 325–345 (LAKSTLLLIPLFGVHYMVFAA) form a helical membrane-spanning segment. Residues 346-353 (FPIGISST) lie on the Extracellular side of the membrane. The helical transmembrane segment at 354–377 (YQILFELCVGSFQGLVVAVLYCFL) threads the bilayer. The Cytoplasmic segment spans residues 378–437 (NSEVQCELKRRWRGLCLTQPGSRDYRLHSWSMSRNGSESALQIHRGSRTQSFLQSETSVI).

Belongs to the G-protein coupled receptor 2 family. As to quaternary structure, interacts with ADCYAP1/PACAP (via N-terminal extracellular domain); activated by PACAP27 and CAPAC38 neuropeptides. Interacts with VIP; the interaction results in VIPR1 activation. In terms of tissue distribution, mainly in the thalamus, hippocampus and in the suprachiasmatic nucleus.

It is found in the cell membrane. G protein-coupled receptor activated by the neuropeptides vasoactive intestinal peptide (VIP) and pituitary adenylate cyclase-activating polypeptide (ADCYAP1/PACAP). Binds VIP and both PACAP27 and PACAP38 bioactive peptides with the order of ligand affinity of VIP = PACAP38 &gt; PACAP27. Ligand binding causes a conformation change that triggers signaling via guanine nucleotide-binding proteins (G proteins) and modulates the activity of downstream effectors. Activates cAMP-dependent pathway. May be coupled to phospholipase C. The sequence is that of Vasoactive intestinal polypeptide receptor 2 from Rattus norvegicus (Rat).